We begin with the raw amino-acid sequence, 595 residues long: Aspartate--tRNA(Asp/Asn) ligase (595 aa).

Residue E177 coordinates L-aspartate. An aspartate region spans residues 201–204 (QQFK). R223 serves as a coordination point for L-aspartate. Residues 223–225 (RDE) and Q232 contribute to the ATP site. H455 contacts L-aspartate. E489 is an ATP binding site. L-aspartate is bound at residue R496. ATP is bound at residue 542–545 (GLDR).

This sequence belongs to the class-II aminoacyl-tRNA synthetase family. Type 1 subfamily. As to quaternary structure, homodimer.

Its subcellular location is the cytoplasm. The enzyme catalyses tRNA(Asx) + L-aspartate + ATP = L-aspartyl-tRNA(Asx) + AMP + diphosphate. Aspartyl-tRNA synthetase with relaxed tRNA specificity since it is able to aspartylate not only its cognate tRNA(Asp) but also tRNA(Asn). Reaction proceeds in two steps: L-aspartate is first activated by ATP to form Asp-AMP and then transferred to the acceptor end of tRNA(Asp/Asn). This is Aspartate--tRNA(Asp/Asn) ligase from Opitutus terrae (strain DSM 11246 / JCM 15787 / PB90-1).